Reading from the N-terminus, the 511-residue chain is D-alanine--D-alanyl carrier protein ligase (511 aa).

Residue Thr152–Ser153 coordinates ATP. A D-alanine-binding site is contributed by Asp199. Asn294–Thr299 contacts ATP. Val303 contributes to the D-alanine binding site. ATP is bound by residues Asp385, Tyr397–Arg400, and Lys499. Lys499 contributes to the D-alanine binding site.

The protein belongs to the ATP-dependent AMP-binding enzyme family. DltA subfamily.

The protein localises to the cytoplasm. It catalyses the reaction holo-[D-alanyl-carrier protein] + D-alanine + ATP = D-alanyl-[D-alanyl-carrier protein] + AMP + diphosphate. The protein operates within cell wall biogenesis; lipoteichoic acid biosynthesis. Catalyzes the first step in the D-alanylation of lipoteichoic acid (LTA), the activation of D-alanine and its transfer onto the D-alanyl carrier protein (Dcp) DltC. In an ATP-dependent two-step reaction, forms a high energy D-alanyl-AMP intermediate, followed by transfer of the D-alanyl residue as a thiol ester to the phosphopantheinyl prosthetic group of the Dcp. D-alanylation of LTA plays an important role in modulating the properties of the cell wall in Gram-positive bacteria, influencing the net charge of the cell wall. The sequence is that of D-alanine--D-alanyl carrier protein ligase from Streptococcus agalactiae serotype V (strain ATCC BAA-611 / 2603 V/R).